The sequence spans 375 residues: Peptidyl-prolyl cis-trans isomerase D (375 aa).

In terms of domain architecture, PPIase cyclophilin-type spans Tyr-7–Val-169. TPR repeat units follow at residues Ala-217–His-250, Leu-270–Ser-307, and Gly-312–Asp-345.

This sequence belongs to the cyclophilin-type PPIase family. PPIase D subfamily.

Its subcellular location is the cytoplasm. The catalysed reaction is [protein]-peptidylproline (omega=180) = [protein]-peptidylproline (omega=0). Functionally, PPIases accelerate the folding of proteins. It catalyzes the cis-trans isomerization of proline imidic peptide bonds in oligopeptides. This chain is Peptidyl-prolyl cis-trans isomerase D (CPR6), found in Cryptococcus neoformans var. neoformans serotype D (strain JEC21 / ATCC MYA-565) (Filobasidiella neoformans).